The following is a 618-amino-acid chain: MKRDVRILLLGEAQVGKTSLIMALVGEEFPEEVPPRAEEITIPADVTPEKVPTHIVDYSESEQTEDELQEEIAKANVVCVVYDVTKEATIEKIRTKWIPMVNGGAEKGARIPIILVGNKSDLQMGSSMEVILPIMNQFSEIETCVECSAKNLKNISELFYYAQKAVLHPTAPLYDPEEKQLRPACSRALTRIFNLSDQDNNQILSDDELNYFQKSCFGNPLAPQALEDVKMVVWKNTTDGVQDNGLTLNGFLFLNTLFIQRGRHETTWTILRRFGYDDELELTDDYLYPQFRLPPGCSTELNHLGYQFLQRLFEKHDKDQDGALSPAELQNFFSVFPCMPWGPELYNTVCTTDKGLLSLHGFLCQWTLIAYLDVRHCLECLGYLGYPILSEQDSQTQALTVTREKRIDLEKGQTQRNVFLCKVLGARGAGKSAFLQAFLGRSLAAQRESPGEPSPYTINTVQVNGQEKYLILHEVSAETQFTKPSDAACDVACLIYDLSDPKSFSYCASIYKQHYMDSQIPCVFVASKTDLPEASQQPGLSPAEFCYKHCLPPPFLFSCHSQGPPGTAIYTKLATAATFPHLNAVELGAASFWLRVALGAAVTALVGFTLYRVLAKNK.

At 1-591 the chain is on the cytoplasmic side; sequence MKRDVRILLL…LNAVELGAAS (591 aa). A Miro 1 domain is found at 2–168; it reads KRDVRILLLG…FYYAQKAVLH (167 aa). GTP contacts are provided by Gly-16, Lys-17, Thr-18, and Ser-19. Thr-18 provides a ligand contact to Mg(2+). Mg(2+) is bound by residues Pro-35 and Asp-57. Ser-59, Asn-118, Lys-119, Asp-121, Ala-149, and Lys-150 together coordinate GTP. 2 EF-hand domains span residues 184–219 and 304–339; these read ACSR…CFGN and LGYQ…FPCM. Ca(2+) is bound by residues Asp-197, Asp-199, Asn-201, Glu-208, Asp-317, Asp-319, Asp-321, and Glu-328. The 164-residue stretch at 416 to 579 folds into the Miro 2 domain; the sequence is RNVFLCKVLG…YTKLATAATF (164 aa). Residues Gly-428, Gly-430, Lys-431, Ser-432, and Ala-433 each contribute to the GTP site. Ser-432 lines the Mg(2+) pocket. Glu-474 serves as a coordination point for Mg(2+). The GTP site is built by Lys-528, Asp-530, and Cys-559. A helical; Anchor for type IV membrane protein transmembrane segment spans residues 592–614; it reads FWLRVALGAAVTALVGFTLYRVL. At 615-618 the chain is on the mitochondrial intermembrane side; sequence AKNK.

Belongs to the mitochondrial Rho GTPase family. In terms of assembly, homodimer.

It is found in the mitochondrion outer membrane. The enzyme catalyses GTP + H2O = GDP + phosphate + H(+). It carries out the reaction ATP + H2O = ADP + phosphate + H(+). It catalyses the reaction UTP + H2O = UDP + phosphate + H(+). In terms of biological role, atypical mitochondrial nucleoside-triphosphatase (NTPase) involved in mitochondrial trafficking. Probably involved in control of anterograde transport of mitochondria and their subcellular distribution. Can hydrolyze GTP, ATP and UTP. This Gallus gallus (Chicken) protein is Mitochondrial Rho GTPase 2 (RHOT2).